We begin with the raw amino-acid sequence, 868 residues long: Protein translocase subunit SecA (868 aa).

Residues Q87, 105-109 (GEGKT), and D500 contribute to the ATP site. Zn(2+) contacts are provided by C849, C851, C860, and H861.

Belongs to the SecA family. In terms of assembly, monomer and homodimer. Part of the essential Sec protein translocation apparatus which comprises SecA, SecYEG and auxiliary proteins SecDF-YajC and YidC. Zn(2+) is required as a cofactor.

The protein resides in the cell membrane. The protein localises to the cytoplasm. The enzyme catalyses ATP + H2O + cellular proteinSide 1 = ADP + phosphate + cellular proteinSide 2.. Its function is as follows. Part of the Sec protein translocase complex. Interacts with the SecYEG preprotein conducting channel. Has a central role in coupling the hydrolysis of ATP to the transfer of proteins into and across the cell membrane, serving both as a receptor for the preprotein-SecB complex and as an ATP-driven molecular motor driving the stepwise translocation of polypeptide chains across the membrane. This Wolbachia pipientis wMel protein is Protein translocase subunit SecA.